We begin with the raw amino-acid sequence, 186 residues long: MRIGLFGGSFDPIHLGHLLAASQAQEVLCLDRVLFVVAARPPHKVPVAPAEARYEMTLLAVAEDPRFTVSRLELDRPGPSYTVDTLRKARRLFPQDELFFITGADAYRDVLTWKEGERLPEYATLVAVARPGYPLEEAPLPVVPLFVPEVGISSTEIRRRLKEGRSVRYWVPRAVEVYIEKHGLYR.

This sequence belongs to the NadD family.

It catalyses the reaction nicotinate beta-D-ribonucleotide + ATP + H(+) = deamido-NAD(+) + diphosphate. It functions in the pathway cofactor biosynthesis; NAD(+) biosynthesis; deamido-NAD(+) from nicotinate D-ribonucleotide: step 1/1. Functionally, catalyzes the reversible adenylation of nicotinate mononucleotide (NaMN) to nicotinic acid adenine dinucleotide (NaAD). The protein is Probable nicotinate-nucleotide adenylyltransferase of Thermus thermophilus (strain ATCC BAA-163 / DSM 7039 / HB27).